A 286-amino-acid chain; its full sequence is Putative L-ribulose-5-phosphate 3-epimerase SgbU (286 aa).

The protein belongs to the L-ribulose-5-phosphate 3-epimerase family.

It carries out the reaction L-ribulose 5-phosphate = L-xylulose 5-phosphate. Catalyzes the isomerization of L-xylulose-5-phosphate to L-ribulose-5-phosphate (Potential). May be involved in the utilization of 2,3-diketo-L-gulonate. This Escherichia coli (strain K12) protein is Putative L-ribulose-5-phosphate 3-epimerase SgbU (sgbU).